Consider the following 239-residue polypeptide: Octanoyltransferase (239 aa).

The BPL/LPL catalytic domain maps to 48-236; it reads EGGDELVWLV…AFETVFGETV (189 aa). Residues 87 to 94, 167 to 169, and 180 to 182 each bind substrate; these read RGGEYTYH, ALG, and GLS. Residue cysteine 198 is the Acyl-thioester intermediate of the active site.

This sequence belongs to the LipB family.

The protein localises to the cytoplasm. The enzyme catalyses octanoyl-[ACP] + L-lysyl-[protein] = N(6)-octanoyl-L-lysyl-[protein] + holo-[ACP] + H(+). It functions in the pathway protein modification; protein lipoylation via endogenous pathway; protein N(6)-(lipoyl)lysine from octanoyl-[acyl-carrier-protein]: step 1/2. Catalyzes the transfer of endogenously produced octanoic acid from octanoyl-acyl-carrier-protein onto the lipoyl domains of lipoate-dependent enzymes. Lipoyl-ACP can also act as a substrate although octanoyl-ACP is likely to be the physiological substrate. In Rhizobium etli (strain CIAT 652), this protein is Octanoyltransferase.